The chain runs to 248 residues: Segregation and condensation protein A (248 aa).

This sequence belongs to the ScpA family. In terms of assembly, component of a cohesin-like complex composed of ScpA, ScpB and the Smc homodimer, in which ScpA and ScpB bind to the head domain of Smc. The presence of the three proteins is required for the association of the complex with DNA.

The protein localises to the cytoplasm. Its function is as follows. Participates in chromosomal partition during cell division. May act via the formation of a condensin-like complex containing Smc and ScpB that pull DNA away from mid-cell into both cell halves. The protein is Segregation and condensation protein A of Clostridium perfringens (strain ATCC 13124 / DSM 756 / JCM 1290 / NCIMB 6125 / NCTC 8237 / Type A).